A 197-amino-acid polypeptide reads, in one-letter code: Dephospho-CoA kinase (197 aa).

Residues 2-197 enclose the DPCK domain; it reads IIGITGGIAS…SALLLLANPR (196 aa). Residue 10–15 participates in ATP binding; that stretch reads ASGKST.

It belongs to the CoaE family.

The protein resides in the cytoplasm. The catalysed reaction is 3'-dephospho-CoA + ATP = ADP + CoA + H(+). It participates in cofactor biosynthesis; coenzyme A biosynthesis; CoA from (R)-pantothenate: step 5/5. Functionally, catalyzes the phosphorylation of the 3'-hydroxyl group of dephosphocoenzyme A to form coenzyme A. The polypeptide is Dephospho-CoA kinase (Streptococcus pyogenes serotype M1).